The following is a 603-amino-acid chain: Aspartate--tRNA(Asp/Asn) ligase (603 aa).

Glutamate 172 contributes to the L-aspartate binding site. Positions 196 to 199 (QLFK) are aspartate. An L-aspartate-binding site is contributed by arginine 218. ATP-binding positions include 218 to 220 (RDE) and glutamine 227. Histidine 457 is an L-aspartate binding site. Glutamate 491 lines the ATP pocket. Position 498 (arginine 498) interacts with L-aspartate. 543–546 (GLDR) serves as a coordination point for ATP.

This sequence belongs to the class-II aminoacyl-tRNA synthetase family. Type 1 subfamily. As to quaternary structure, homodimer.

Its subcellular location is the cytoplasm. It catalyses the reaction tRNA(Asx) + L-aspartate + ATP = L-aspartyl-tRNA(Asx) + AMP + diphosphate. Its function is as follows. Aspartyl-tRNA synthetase with relaxed tRNA specificity since it is able to aspartylate not only its cognate tRNA(Asp) but also tRNA(Asn). Reaction proceeds in two steps: L-aspartate is first activated by ATP to form Asp-AMP and then transferred to the acceptor end of tRNA(Asp/Asn). The protein is Aspartate--tRNA(Asp/Asn) ligase of Laribacter hongkongensis (strain HLHK9).